The following is a 338-amino-acid chain: Phenylalanine--tRNA ligase alpha subunit (338 aa).

Position 252 (Glu-252) interacts with Mg(2+).

The protein belongs to the class-II aminoacyl-tRNA synthetase family. Phe-tRNA synthetase alpha subunit type 1 subfamily. In terms of assembly, tetramer of two alpha and two beta subunits. The cofactor is Mg(2+).

The protein localises to the cytoplasm. It catalyses the reaction tRNA(Phe) + L-phenylalanine + ATP = L-phenylalanyl-tRNA(Phe) + AMP + diphosphate + H(+). This is Phenylalanine--tRNA ligase alpha subunit from Azotobacter vinelandii (strain DJ / ATCC BAA-1303).